Reading from the N-terminus, the 240-residue chain is (DL)-glycerol-3-phosphatase 2 (240 aa).

Residue Asp20 is the Nucleophile of the active site. Asp20, Asp22, and Asp185 together coordinate Mg(2+). Residue Asp22 is the Proton donor of the active site.

It belongs to the HAD-like hydrolase superfamily. DOG/GPP family. Requires Mg(2+) as cofactor. In terms of tissue distribution, ubiquitous with highest expression in siliques. Mainly restricted to the meristem of immature flower and vascular elements of the root, shoot, leave, siliqua and developing embryo (at the protein level).

It localises to the cytoplasm. It carries out the reaction sn-glycerol 1-phosphate + H2O = glycerol + phosphate. It catalyses the reaction sn-glycerol 3-phosphate + H2O = glycerol + phosphate. Its function is as follows. Acts as a glycerol-3-phosphatase with higher stereospecificity for L-glycerol-3-phosphate than DL-glycerol-3-phosphate. The protein is (DL)-glycerol-3-phosphatase 2 (GPP2) of Arabidopsis thaliana (Mouse-ear cress).